The following is a 407-amino-acid chain: Putative ammonium transporter MTH_661 (407 aa).

12 helical membrane passes run 9-29, 47-67, 70-90, 101-121, 129-149, 162-182, 196-216, 226-246, 257-277, 279-299, 312-332, and 357-377; these read AWML…VAMF, FVSL…LIFG, VSGI…GSAS, FAIF…GAVV, WILF…HWVW, FAGG…LALV, LGYS…FNAG, ANAM…WILM, LGAL…AGFV, IGAS…AVSW, VFGI…LFAV, and IGVV…AMLL.

Belongs to the ammonia transporter channel (TC 1.A.11.2) family.

Its subcellular location is the cell membrane. The protein is Putative ammonium transporter MTH_661 of Methanothermobacter thermautotrophicus (strain ATCC 29096 / DSM 1053 / JCM 10044 / NBRC 100330 / Delta H) (Methanobacterium thermoautotrophicum).